Here is a 205-residue protein sequence, read N- to C-terminus: GTP cyclohydrolase-2 (205 aa).

Residue 49-53 (RVHSE) coordinates GTP. Residues C54, C65, and C67 each coordinate Zn(2+). Residues Q70, 92 to 94 (EGR), and T114 each bind GTP. D126 (proton acceptor) is an active-site residue. The Nucleophile role is filled by R128. Positions 149 and 154 each coordinate GTP.

It belongs to the GTP cyclohydrolase II family. Zn(2+) is required as a cofactor.

It catalyses the reaction GTP + 4 H2O = 2,5-diamino-6-hydroxy-4-(5-phosphoribosylamino)-pyrimidine + formate + 2 phosphate + 3 H(+). The protein operates within cofactor biosynthesis; riboflavin biosynthesis; 5-amino-6-(D-ribitylamino)uracil from GTP: step 1/4. In terms of biological role, catalyzes the conversion of GTP to 2,5-diamino-6-ribosylamino-4(3H)-pyrimidinone 5'-phosphate (DARP), formate and pyrophosphate. The polypeptide is GTP cyclohydrolase-2 (Pseudomonas syringae pv. tomato (strain ATCC BAA-871 / DC3000)).